Here is a 200-residue protein sequence, read N- to C-terminus: Recombination protein RecR (200 aa).

The C4-type zinc finger occupies 59–74 (CSTCGSLDTQDPCAIC). The 96-residue stretch at 82–177 (SLICVVEEVG…TVSMLARGVP (96 aa)) folds into the Toprim domain.

The protein belongs to the RecR family.

May play a role in DNA repair. It seems to be involved in an RecBC-independent recombinational process of DNA repair. It may act with RecF and RecO. The chain is Recombination protein RecR from Phenylobacterium zucineum (strain HLK1).